A 177-amino-acid polypeptide reads, in one-letter code: Large ribosomal subunit protein uL6 (177 aa).

This sequence belongs to the universal ribosomal protein uL6 family. In terms of assembly, part of the 50S ribosomal subunit.

Its function is as follows. This protein binds to the 23S rRNA, and is important in its secondary structure. It is located near the subunit interface in the base of the L7/L12 stalk, and near the tRNA binding site of the peptidyltransferase center. This Bradyrhizobium diazoefficiens (strain JCM 10833 / BCRC 13528 / IAM 13628 / NBRC 14792 / USDA 110) protein is Large ribosomal subunit protein uL6.